A 210-amino-acid chain; its full sequence is DNA-directed RNA polymerases I, II, and III subunit RPABC1 (210 aa).

M1 is subject to N-acetylmethionine. K81 is covalently cross-linked (Glycyl lysine isopeptide (Lys-Gly) (interchain with G-Cter in SUMO2)).

Belongs to the archaeal Rpo5/eukaryotic RPB5 RNA polymerase subunit family. Component of the RNA polymerase I (Pol I), RNA polymerase II (Pol II) and RNA polymerase III (Pol III) complexes consisting of at least 13, 12 and 17 subunits, respectively. Pol I complex consists of a ten-subunit catalytic core composed of POLR1A/RPA1, POLR1B/RPA2, POLR1C/RPAC1, POLR1D/RPAC2, POLR1H/RPA12, POLR2E/RPABC1, POLR2F/RPABC2, POLR2H/RPABC3, POLR2K/RPABC4 and POLR2L/RPABC5; a mobile stalk subunit POLR1F/RPA43 protruding from the core and additional subunits homologous to general transcription factors POLR1E/RPA49 and POLR1G/RPA34. Part of Pol I pre-initiation complex (PIC), in which Pol I core assembles with RRN3 and promoter-bound UTBF and SL1/TIF-IB complex. Pol II complex contains a ten-subunit catalytic core composed of POLR2A/RPB1, POLR2B/RPB2, POLR2C/RPB3, POLR2I/RPB9, POLR2J/RPB11, POLR2E/RPABC1, POLR2F/RPABC2, POLR2H/RPABC3, POLR2K/RPABC4 and POLR2L/RPABC5 and a mobile stalk composed of two subunits POLR2D/RPB4 and POLR2G/RPB7. Part of Pol II(G) complex, in which Pol II core associates with an additional subunit POLR2M; unlike conventional Pol II, Pol II(G) functions as a transcriptional repressor. Part of TBP-based Pol II pre-initiation complex (PIC), in which Pol II core assembles with general transcription factors and other specific initiation factors including GTF2E1, GTF2E2, GTF2F1, GTF2F2, TCEA1, ERCC2, ERCC3, GTF2H2, GTF2H3, GTF2H4, GTF2H5, GTF2A1, GTF2A2, GTF2B and TBP; this large multi-subunit PIC complex mediates DNA unwinding and targets Pol II core to the transcription start site where the first phosphodiester bond forms. In Pol II complex, this subunit is present in 2-fold molar excess over the other subunits. Pol III complex consists of a ten-subunit catalytic core composed of POLR3A/RPC1, POLR3B/RPC2, POLR1C/RPAC1, POLR1D/RPAC2, POLR3K/RPC10, POLR2E/RPABC1, POLR2F/RPABC2, POLR2H/RPABC3, POLR2K/RPABC4 and POLR2L/RPABC5; a mobile stalk composed of two subunits POLR3H/RPC8 and CRCP/RPC9, protruding from the core and functioning primarily in transcription initiation; and additional subunits homologous to general transcription factors of the RNA polymerase II machinery, POLR3C/RPC3-POLR3F/RPC6-POLR3G/RPC7 heterotrimer required for transcription initiation and POLR3D/RPC4-POLR3E/RPC5 heterodimer involved in both transcription initiation and termination. Component of the PAQosome complex which is responsible for the biogenesis of several protein complexes and which consists of R2TP complex members RUVBL1, RUVBL2, RPAP3 and PIH1D1, URI complex members PFDN2, PFDN6, PDRG1, UXT and URI1 as well as ASDURF, POLR2E and DNAAF10/WDR92. Interacts with URI1.

It is found in the nucleus. It localises to the nucleolus. DNA-dependent RNA polymerase catalyzes the transcription of DNA into RNA using the four ribonucleoside triphosphates as substrates. Common component of RNA polymerases I, II and III which synthesize ribosomal RNA precursors, mRNA precursors and many functional non-coding RNAs, and small RNAs, such as 5S rRNA and tRNAs, respectively. Pol II is the central component of the basal RNA polymerase II transcription machinery. Pols are composed of mobile elements that move relative to each other. In Pol II, POLR2E/RPABC1 is part of the lower jaw surrounding the central large cleft and thought to grab the incoming DNA template. Seems to be the major component in this process. The chain is DNA-directed RNA polymerases I, II, and III subunit RPABC1 from Mus musculus (Mouse).